A 96-amino-acid chain; its full sequence is Co-chaperonin GroES (96 aa).

It belongs to the GroES chaperonin family. In terms of assembly, heptamer of 7 subunits arranged in a ring. Interacts with the chaperonin GroEL.

It is found in the cytoplasm. Functionally, together with the chaperonin GroEL, plays an essential role in assisting protein folding. The GroEL-GroES system forms a nano-cage that allows encapsulation of the non-native substrate proteins and provides a physical environment optimized to promote and accelerate protein folding. GroES binds to the apical surface of the GroEL ring, thereby capping the opening of the GroEL channel. The protein is Co-chaperonin GroES of Neisseria gonorrhoeae (strain ATCC 700825 / FA 1090).